Consider the following 157-residue polypeptide: Arginine repressor (157 aa).

The protein belongs to the ArgR family.

Its subcellular location is the cytoplasm. The protein operates within amino-acid biosynthesis; L-arginine biosynthesis [regulation]. In terms of biological role, regulates arginine biosynthesis genes. The protein is Arginine repressor of Bacteroides fragilis (strain ATCC 25285 / DSM 2151 / CCUG 4856 / JCM 11019 / LMG 10263 / NCTC 9343 / Onslow / VPI 2553 / EN-2).